Consider the following 938-residue polypeptide: E3 ubiquitin-protein ligase CBL-B (938 aa).

A 4H region spans residues 35–167 (PPKQAAADRR…KAIFPNGQFQ (133 aa)). The Cbl-PTB domain maps to 35–343 (PPKQAAADRR…GRSYNPDLTG (309 aa)). The segment at 168–240 (GDNFRITKAD…FEFDIFTRLF (73 aa)) is EF-hand-like. Aspartate 221, threonine 223, asparagine 225, tyrosine 227, and glutamate 232 together coordinate Ca(2+). The SH2-like stretch occupies residues 241–343 (QPWGSILRNW…GRSYNPDLTG (103 aa)). The residue at position 282 (serine 282) is a Phosphoserine; by PKC/PRKCQ. 4-O-phospho-L-tyrosine is bound at residue arginine 286. Residues 344–372 (LCEPTPHDHIKVTQEQYELYCEMGSTFQL) are linker. Position 363 is a phosphotyrosine (tyrosine 363). Residues 373–412 (CKICAENDKDVKIEPCGHLMCTSCLTAWQESDGQGCPFCR) form an RING-type zinc finger. The interval 465 to 588 (ASVRKCTDRQ…SVPSRDQPMP (124 aa)) is disordered. A compositionally biased stretch (polar residues) spans 473-486 (RQNSPVTSPGSSPL). Phosphoserine occurs at positions 476, 480, 484, 521, 525, and 529. The tract at residues 543 to 567 (PLPAPPPPLRDPPPPPERPPPIPPD) is interaction with VAV1. The span at 544 to 566 (LPAPPPPLRDPPPPPERPPPIPP) shows a compositional bias: pro residues. Serine 633 carries the phosphoserine modification. Tyrosine 664 and tyrosine 708 each carry phosphotyrosine. 2 disordered regions span residues 702–725 (EEDD…PSHC) and 771–885 (DALP…EAAL). Over residues 714-724 (HPVSLNSQPSH) the composition is skewed to polar residues. Over residues 775 to 784 (PSLPPPPPPA) the composition is skewed to pro residues. Residues 794 to 804 (PPGSSSRPSSG) are compositionally biased toward low complexity. Residues 839–855 (NRASQDYDQLPSSSDGS) are compositionally biased toward polar residues. Tyrosine 845 is subject to Phosphotyrosine. The tract at residues 847 to 883 (QLPSSSDGSQAPARPPKPRPRRTAPEIHHRKPHGPEA) is interaction with SH3KBP1. Positions 862 to 878 (PKPRPRRTAPEIHHRKP) are enriched in basic residues. One can recognise a UBA domain in the interval 887–926 (NVDAKIAKLMGEGYAFEEVKRALEIAQNNLEVARSILREF).

As to quaternary structure, interacts with SH3 domain-containing proteins LCK, CRK and SORBS1. Interacts with LCP2 and ZAP70. Interacts with CBL. Interacts with SH3 domain-containing proteins VAV1, FYN, FGR, PLCG1, GRB2, CRKL, PIK3R1 and SH3KBP1/CIN85. Identified in heterotrimeric complexes with SH3KBP1/CIN85, CD2AP and ARHGEF7, where one CBLB peptide binds two copies of the other protein. Interacts with poly-ubiquitinated proteins. Dimerization is required for the binding of poly-ubiquitin, but not for the binding of mono-ubiquitin. Interacts with EGFR (phosphorylated). Interacts with IFT20. Post-translationally, phosphorylated on tyrosine and serine residues upon TCR or BCR activation, and upon various types of cell stimulation. In terms of processing, auto-ubiquitinated upon EGF-mediated cell activation or upon T-cell costimulation by CD28; which promotes proteasomal degradation.

Its subcellular location is the cytoplasm. The catalysed reaction is S-ubiquitinyl-[E2 ubiquitin-conjugating enzyme]-L-cysteine + [acceptor protein]-L-lysine = [E2 ubiquitin-conjugating enzyme]-L-cysteine + N(6)-ubiquitinyl-[acceptor protein]-L-lysine.. It participates in protein modification; protein ubiquitination. Functionally, E3 ubiquitin-protein ligase which accepts ubiquitin from specific E2 ubiquitin-conjugating enzymes, and transfers it to substrates, generally promoting their degradation by the proteasome. Negatively regulates TCR (T-cell receptor), BCR (B-cell receptor) and FCER1 (high affinity immunoglobulin epsilon receptor) signal transduction pathways. In naive T-cells, inhibits VAV1 activation upon TCR engagement and imposes a requirement for CD28 costimulation for proliferation and IL-2 production. Also acts by promoting PIK3R1/p85 ubiquitination, which impairs its recruitment to the TCR and subsequent activation. In activated T-cells, inhibits PLCG1 activation and calcium mobilization upon restimulation and promotes anergy. In B-cells, acts by ubiquitinating SYK and promoting its proteasomal degradation. Slightly promotes SRC ubiquitination. May be involved in EGFR ubiquitination and internalization. May be functionally coupled with the E2 ubiquitin-protein ligase UB2D3. In association with CBL, required for proper feedback inhibition of ciliary platelet-derived growth factor receptor-alpha (PDGFRA) signaling pathway via ubiquitination and internalization of PDGFRA. In Rattus norvegicus (Rat), this protein is E3 ubiquitin-protein ligase CBL-B (Cblb).